A 239-amino-acid polypeptide reads, in one-letter code: Cytochrome b6-f complex iron-sulfur subunit 1, cyanelle (239 aa).

A cyanelle-targeting transit peptide spans 1–60 (MAFTTTAVVAPRGAKITGQSSTCAIQNGKTVAVGTSKQVGSFKPVFAAAKPAKETTFSVS). A helical transmembrane segment spans residues 81-101 (LLGAIAGPVAGAGGPFVSFLV). Residues 125-221 (VSSWLETHKP…VSVLEDGVVA (97 aa)) form the Rieske domain. Residues C167, H169, C185, and H188 each coordinate [2Fe-2S] cluster. A disulfide bridge links C172 with C187.

Belongs to the Rieske iron-sulfur protein family. In terms of assembly, the 4 large subunits of the cytochrome b6-f complex are cytochrome b6, subunit IV (17 kDa polypeptide, petD), cytochrome f and the Rieske protein, while the 4 small subunits are petG, petL, petM and petN. The complex functions as a dimer. Requires [2Fe-2S] cluster as cofactor.

The protein resides in the plastid. Its subcellular location is the cyanelle thylakoid membrane. It catalyses the reaction 2 oxidized [plastocyanin] + a plastoquinol + 2 H(+)(in) = 2 reduced [plastocyanin] + a plastoquinone + 4 H(+)(out). Component of the cytochrome b6-f complex, which mediates electron transfer between photosystem II (PSII) and photosystem I (PSI), cyclic electron flow around PSI, and state transitions. In Cyanophora paradoxa, this protein is Cytochrome b6-f complex iron-sulfur subunit 1, cyanelle (petC-1).